We begin with the raw amino-acid sequence, 145 residues long: Ribosome-binding factor A (145 aa).

The interval 126–145 (RDLDTETDAEAGSETTKEED) is disordered. The segment covering 130–145 (TETDAEAGSETTKEED) has biased composition (acidic residues).

Belongs to the RbfA family. In terms of assembly, monomer. Binds 30S ribosomal subunits, but not 50S ribosomal subunits or 70S ribosomes.

Its subcellular location is the cytoplasm. In terms of biological role, one of several proteins that assist in the late maturation steps of the functional core of the 30S ribosomal subunit. Associates with free 30S ribosomal subunits (but not with 30S subunits that are part of 70S ribosomes or polysomes). Required for efficient processing of 16S rRNA. May interact with the 5'-terminal helix region of 16S rRNA. In Azorhizobium caulinodans (strain ATCC 43989 / DSM 5975 / JCM 20966 / LMG 6465 / NBRC 14845 / NCIMB 13405 / ORS 571), this protein is Ribosome-binding factor A.